The primary structure comprises 100 residues: Small ribosomal subunit protein uS14c (100 aa).

It belongs to the universal ribosomal protein uS14 family. Part of the 30S ribosomal subunit.

Its subcellular location is the plastid. Its function is as follows. Binds 16S rRNA, required for the assembly of 30S particles. This Cuscuta reflexa (Southern Asian dodder) protein is Small ribosomal subunit protein uS14c (rps14).